A 131-amino-acid chain; its full sequence is DNA-directed RNA polymerase subunit omega (131 aa).

The protein belongs to the RNA polymerase subunit omega family. As to quaternary structure, the RNAP catalytic core consists of 2 alpha, 1 beta, 1 beta' and 1 omega subunit. When a sigma factor is associated with the core the holoenzyme is formed, which can initiate transcription.

It carries out the reaction RNA(n) + a ribonucleoside 5'-triphosphate = RNA(n+1) + diphosphate. Its function is as follows. Promotes RNA polymerase assembly. Latches the N- and C-terminal regions of the beta' subunit thereby facilitating its interaction with the beta and alpha subunits. The polypeptide is DNA-directed RNA polymerase subunit omega (Chelativorans sp. (strain BNC1)).